The primary structure comprises 311 residues: Protein translocase subunit SecF (311 aa).

6 helical membrane-spanning segments follow: residues 19 to 39, 142 to 162, 166 to 186, 192 to 212, 245 to 265, and 272 to 292; these read AIYASLFLIGVSLVSLFTQGL, MLAMLYAMVAILIYISFRFEL, LGAVLALVHDVVLTMGFFSVL, LVVVAALLTVVGYSLNDTIVV, ITSLTTVLVLIALFVLGGAVI, and LLFGVGIGTYSSIFVASPLVL.

It belongs to the SecD/SecF family. SecF subfamily. As to quaternary structure, forms a complex with SecD. Part of the essential Sec protein translocation apparatus which comprises SecA, SecYEG and auxiliary proteins SecDF-YajC and YidC.

It localises to the cell inner membrane. Its function is as follows. Part of the Sec protein translocase complex. Interacts with the SecYEG preprotein conducting channel. SecDF uses the proton motive force (PMF) to complete protein translocation after the ATP-dependent function of SecA. This Magnetococcus marinus (strain ATCC BAA-1437 / JCM 17883 / MC-1) protein is Protein translocase subunit SecF.